The primary structure comprises 320 residues: tRNA-cytidine(32) 2-sulfurtransferase (320 aa).

The short motif at 54–59 (SGGKDS) is the PP-loop motif element. 3 residues coordinate [4Fe-4S] cluster: C129, C132, and C220.

Belongs to the TtcA family. In terms of assembly, homodimer. Requires Mg(2+) as cofactor. [4Fe-4S] cluster is required as a cofactor.

The protein resides in the cytoplasm. The catalysed reaction is cytidine(32) in tRNA + S-sulfanyl-L-cysteinyl-[cysteine desulfurase] + AH2 + ATP = 2-thiocytidine(32) in tRNA + L-cysteinyl-[cysteine desulfurase] + A + AMP + diphosphate + H(+). The protein operates within tRNA modification. Functionally, catalyzes the ATP-dependent 2-thiolation of cytidine in position 32 of tRNA, to form 2-thiocytidine (s(2)C32). The sulfur atoms are provided by the cysteine/cysteine desulfurase (IscS) system. In Bordetella pertussis (strain Tohama I / ATCC BAA-589 / NCTC 13251), this protein is tRNA-cytidine(32) 2-sulfurtransferase.